The sequence spans 319 residues: Acetyl-coenzyme A carboxylase carboxyl transferase subunit alpha (319 aa).

A CoA carboxyltransferase C-terminal domain is found at 35–296; sequence NIDEEVHRLR…KAQLLADLAD (262 aa).

Belongs to the AccA family. Acetyl-CoA carboxylase is a heterohexamer composed of biotin carboxyl carrier protein (AccB), biotin carboxylase (AccC) and two subunits each of ACCase subunit alpha (AccA) and ACCase subunit beta (AccD).

The protein resides in the cytoplasm. The enzyme catalyses N(6)-carboxybiotinyl-L-lysyl-[protein] + acetyl-CoA = N(6)-biotinyl-L-lysyl-[protein] + malonyl-CoA. It functions in the pathway lipid metabolism; malonyl-CoA biosynthesis; malonyl-CoA from acetyl-CoA: step 1/1. In terms of biological role, component of the acetyl coenzyme A carboxylase (ACC) complex. First, biotin carboxylase catalyzes the carboxylation of biotin on its carrier protein (BCCP) and then the CO(2) group is transferred by the carboxyltransferase to acetyl-CoA to form malonyl-CoA. This Klebsiella pneumoniae subsp. pneumoniae (strain ATCC 700721 / MGH 78578) protein is Acetyl-coenzyme A carboxylase carboxyl transferase subunit alpha.